A 601-amino-acid polypeptide reads, in one-letter code: Deuterosome assembly protein 1 (601 aa).

Coiled coils occupy residues 14 to 59, 86 to 197, and 226 to 278; these read CEAE…NAQT, TQNY…KQQR, and IEKL…LQSR. Disordered regions lie at residues 115–135 and 188–213; these read MKQNQSHRKEASNKDETPFEL and QTQLNGKQQRPEDSSPETPRLVCESS. Basic and acidic residues predominate over residues 121-131; that stretch reads HRKEASNKDET. The tract at residues 307 to 326 is disordered; sequence DNRKRVESSYSPSTKEPERK. A coiled-coil region spans residues 340–397; it reads HEKELNKMRSQLYQEEDLCSEQERMRNEISELTQELHQKEVTIATIMKKAALLERQLK. S544 carries the phosphoserine modification. The stretch at 555–586 forms a coiled coil; that stretch reads AAQHFLMEEEKRAKELEKLLNTHIDELQRHTE.

This sequence belongs to the CEP63 family. Interacts with CEP152; the interaction is mutually exclusive with CEP63.

Its subcellular location is the cytoplasm. In terms of biological role, key structural component of the deuterosome, a structure that promotes de novo centriole amplification in multiciliated cells. Deuterosome-mediated centriole amplification occurs in terminally differentiated multiciliated cells and can generate more than 100 centrioles. Probably sufficient for the specification and formation of the deuterosome inner core. Interacts with CEP152 and recruits PLK4 to activate centriole biogenesis. The protein is Deuterosome assembly protein 1 of Rattus norvegicus (Rat).